The primary structure comprises 333 residues: L-lactate dehydrogenase B chain (333 aa).

NAD(+)-binding positions include 29 to 57 and R99; that span reads GQVG…IEDK. Residues R106, N138, and R169 each contribute to the substrate site. N138 serves as a coordination point for NAD(+). H193 functions as the Proton acceptor in the catalytic mechanism. Residue T248 coordinates substrate.

This sequence belongs to the LDH/MDH superfamily. LDH family. Homotetramer.

It localises to the cytoplasm. It catalyses the reaction (S)-lactate + NAD(+) = pyruvate + NADH + H(+). Its pathway is fermentation; pyruvate fermentation to lactate; (S)-lactate from pyruvate: step 1/1. Functionally, interconverts simultaneously and stereospecifically pyruvate and lactate with concomitant interconversion of NADH and NAD(+). This Anguilla rostrata (American eel) protein is L-lactate dehydrogenase B chain (ldhb).